Reading from the N-terminus, the 339-residue chain is Ketol-acid reductoisomerase (NADP(+)) (339 aa).

Residues 1-182 form the KARI N-terminal Rossmann domain; it reads MRVYYDRDAD…GGGRAGIIET (182 aa). NADP(+)-binding positions include 24 to 27, Arg48, Ser51, Ser53, and 83 to 86; these read YGSQ and DELQ. His108 is a catalytic residue. Gly134 lines the NADP(+) pocket. Residues 183–328 form the KARI C-terminal knotted domain; sequence TFREECETDL…AKLRDMMPWI (146 aa). Residues Asp191, Glu195, Glu227, and Glu231 each contribute to the Mg(2+) site. Ser252 contributes to the substrate binding site.

Belongs to the ketol-acid reductoisomerase family. Requires Mg(2+) as cofactor.

The catalysed reaction is (2R)-2,3-dihydroxy-3-methylbutanoate + NADP(+) = (2S)-2-acetolactate + NADPH + H(+). The enzyme catalyses (2R,3R)-2,3-dihydroxy-3-methylpentanoate + NADP(+) = (S)-2-ethyl-2-hydroxy-3-oxobutanoate + NADPH + H(+). It functions in the pathway amino-acid biosynthesis; L-isoleucine biosynthesis; L-isoleucine from 2-oxobutanoate: step 2/4. Its pathway is amino-acid biosynthesis; L-valine biosynthesis; L-valine from pyruvate: step 2/4. Functionally, involved in the biosynthesis of branched-chain amino acids (BCAA). Catalyzes an alkyl-migration followed by a ketol-acid reduction of (S)-2-acetolactate (S2AL) to yield (R)-2,3-dihydroxy-isovalerate. In the isomerase reaction, S2AL is rearranged via a Mg-dependent methyl migration to produce 3-hydroxy-3-methyl-2-ketobutyrate (HMKB). In the reductase reaction, this 2-ketoacid undergoes a metal-dependent reduction by NADPH to yield (R)-2,3-dihydroxy-isovalerate. This Rhodopseudomonas palustris (strain ATCC BAA-98 / CGA009) protein is Ketol-acid reductoisomerase (NADP(+)).